We begin with the raw amino-acid sequence, 363 residues long: Inositol-3-phosphate synthase (363 aa).

Residue K65 forms an Isoglutamyl lysine isopeptide (Lys-Gln) (interchain with Q-Cter in protein Pup) linkage. NAD(+)-binding residues include D70, A129, Y149, S192, D227, and K240.

The protein belongs to the myo-inositol 1-phosphate synthase family. Requires NAD(+) as cofactor. Pupylated at Lys-65 by the prokaryotic ubiquitin-like protein Pup, which leads to its degradation by the proteasome.

It catalyses the reaction D-glucose 6-phosphate = 1D-myo-inositol 3-phosphate. Functionally, key enzyme in myo-inositol biosynthesis pathway that catalyzes the conversion of glucose 6-phosphate to 1D-myo-inositol 3-phosphate in a NAD-dependent manner. This Mycolicibacterium smegmatis (strain ATCC 700084 / mc(2)155) (Mycobacterium smegmatis) protein is Inositol-3-phosphate synthase (ino1).